Here is a 222-residue protein sequence, read N- to C-terminus: Cytidylate kinase (222 aa).

Position 10-18 (10-18 (GPAGAGKST)) interacts with ATP.

Belongs to the cytidylate kinase family. Type 1 subfamily.

It is found in the cytoplasm. The enzyme catalyses CMP + ATP = CDP + ADP. It catalyses the reaction dCMP + ATP = dCDP + ADP. This chain is Cytidylate kinase, found in Halalkalibacterium halodurans (strain ATCC BAA-125 / DSM 18197 / FERM 7344 / JCM 9153 / C-125) (Bacillus halodurans).